The sequence spans 656 residues: uncharacterized protein (656 aa).

Disordered stretches follow at residues M1–G41 and S60–E88. Over residues S22 to V36 the composition is skewed to low complexity. Residue S39 is modified to Phosphoserine. Positions K62–T78 are enriched in basic and acidic residues.

It is found in the cytoplasm. The protein resides in the mitochondrion. This is an uncharacterized protein from Saccharomyces cerevisiae (strain ATCC 204508 / S288c) (Baker's yeast).